The chain runs to 535 residues: Ribonuclease Y (535 aa).

The chain crosses the membrane as a helical span at residues 4–24 (IILLIVSALIGLILGYALISI). A disordered region spans residues 118 to 141 (ENLSSKEKVLDSKEQSLTDKSKHI). Residues 225–285 (TITSVHLPDD…IRREIARMTL (61 aa)) form the KH domain. The 94-residue stretch at 351–444 (VLRHSVEVGK…VAAADALSSA (94 aa)) folds into the HD domain.

Belongs to the RNase Y family.

Its subcellular location is the cell membrane. Functionally, endoribonuclease that initiates mRNA decay. The chain is Ribonuclease Y from Streptococcus pyogenes serotype M2 (strain MGAS10270).